The chain runs to 603 residues: NADH-ubiquinone oxidoreductase chain 5 (603 aa).

A run of 15 helical transmembrane segments spans residues Ser-38–Asp-58, Met-87–Tyr-107, Leu-122–Ile-142, Trp-144–Ala-160, Ala-171–Leu-191, Thr-211–Leu-233, Thr-241–Ile-261, Leu-272–Ala-292, Ile-301–Asn-320, Ala-325–Ile-347, Ser-370–Tyr-390, Trp-407–Leu-429, Ala-458–Phe-478, Ile-482–Leu-502, and Gly-582–Ile-602.

The protein belongs to the complex I subunit 5 family. In terms of assembly, core subunit of respiratory chain NADH dehydrogenase (Complex I) which is composed of 45 different subunits.

It localises to the mitochondrion inner membrane. It carries out the reaction a ubiquinone + NADH + 5 H(+)(in) = a ubiquinol + NAD(+) + 4 H(+)(out). In terms of biological role, core subunit of the mitochondrial membrane respiratory chain NADH dehydrogenase (Complex I) which catalyzes electron transfer from NADH through the respiratory chain, using ubiquinone as an electron acceptor. Essential for the catalytic activity and assembly of complex I. The chain is NADH-ubiquinone oxidoreductase chain 5 (MT-ND5) from Homo sapiens (Human).